The following is a 388-amino-acid chain: uncharacterized protein (388 aa).

Residues 68 to 96 are a coiled coil; that stretch reads KVDRMSEEEERMAIATRKAKEVAKELSET. Residues 162 to 388 form a disordered region; that stretch reads GSHPLVREFN…PPQQDWFDSV (227 aa). Composition is skewed to basic and acidic residues over residues 166 to 176 and 196 to 208; these read LVREFNGEKPP and ATDK…QSDK. Over residues 233–251 the composition is skewed to basic residues; it reads GVKHQHAIRRDDRHRHGMR. Composition is skewed to low complexity over residues 265–279 and 293–346; these read QQQQ…SRGQ and QRRP…QRPA.

This is an uncharacterized protein from Frog virus 3 (isolate Goorha) (FV-3).